Here is a 518-residue protein sequence, read N- to C-terminus: Protein translocase subunit SecD (518 aa).

The next 6 membrane-spanning stretches (helical) occupy residues 9–29 (IFLS…NFMQ), 361–381 (LIGF…LGLF), 384–404 (IALS…QATL), 406–426 (LPGI…NVLI), 452–474 (FATI…IFGV), and 486–506 (IGII…IDIW).

It belongs to the SecD/SecF family. SecD subfamily. As to quaternary structure, forms a complex with SecF. Part of the essential Sec protein translocation apparatus which comprises SecA, SecYEG and auxiliary proteins SecDF-YajC and YidC.

The protein resides in the cell inner membrane. In terms of biological role, part of the Sec protein translocase complex. Interacts with the SecYEG preprotein conducting channel. SecDF uses the proton motive force (PMF) to complete protein translocation after the ATP-dependent function of SecA. This chain is Protein translocase subunit SecD, found in Rickettsia felis (strain ATCC VR-1525 / URRWXCal2) (Rickettsia azadi).